A 144-amino-acid chain; its full sequence is MPTVNQLVRKGRTSAAKKYKAPALHYSFNSLRNKVAFGDGSPQKRGVCTQVKTTTPKKPNSALRKIARVRLSNHMEVTAYIPGEGHNLQEHSVVLIRGGRVPDLPGVRYHIIRGTLDTAGVANRQQGRSRYGAKKGKAAPAKKK.

A 3-methylthioaspartic acid modification is found at aspartate 103. Residues 125–144 form a disordered region; sequence QQGRSRYGAKKGKAAPAKKK. The span at 131 to 144 shows a compositional bias: basic residues; sequence YGAKKGKAAPAKKK.

The protein belongs to the universal ribosomal protein uS12 family. Part of the 30S ribosomal subunit. Contacts proteins S8 and S17. May interact with IF1 in the 30S initiation complex.

Functionally, with S4 and S5 plays an important role in translational accuracy. Interacts with and stabilizes bases of the 16S rRNA that are involved in tRNA selection in the A site and with the mRNA backbone. Located at the interface of the 30S and 50S subunits, it traverses the body of the 30S subunit contacting proteins on the other side and probably holding the rRNA structure together. The combined cluster of proteins S8, S12 and S17 appears to hold together the shoulder and platform of the 30S subunit. This is Small ribosomal subunit protein uS12 from Dehalococcoides mccartyi (strain ATCC BAA-2100 / JCM 16839 / KCTC 5957 / BAV1).